The following is a 276-amino-acid chain: Large ribosomal subunit protein uL2 (276 aa).

2 disordered regions span residues 33–55 (LVEA…RHIG) and 221–276 (RGTA…AKKK).

It belongs to the universal ribosomal protein uL2 family. As to quaternary structure, part of the 50S ribosomal subunit. Forms a bridge to the 30S subunit in the 70S ribosome.

One of the primary rRNA binding proteins. Required for association of the 30S and 50S subunits to form the 70S ribosome, for tRNA binding and peptide bond formation. It has been suggested to have peptidyltransferase activity; this is somewhat controversial. Makes several contacts with the 16S rRNA in the 70S ribosome. This is Large ribosomal subunit protein uL2 from Psychrobacter sp. (strain PRwf-1).